Here is a 358-residue protein sequence, read N- to C-terminus: Probable D-xylulose reductase A (358 aa).

Zn(2+) is bound by residues Cys47, His72, and Glu73. Gly182–Gly187 lines the NAD(+) pocket.

It belongs to the zinc-containing alcohol dehydrogenase family. It depends on Zn(2+) as a cofactor.

It carries out the reaction xylitol + NAD(+) = D-xylulose + NADH + H(+). Its pathway is carbohydrate degradation; L-arabinose degradation via L-arabinitol; D-xylulose 5-phosphate from L-arabinose (fungal route): step 4/5. Xylitol dehydrogenase which catalyzes the conversion of xylitol to D-xylulose. Xylose is a major component of hemicelluloses such as xylan. Most fungi utilize D-xylose via three enzymatic reactions, xylose reductase (XR), xylitol dehydrogenase (XDH), and xylulokinase, to form xylulose 5-phosphate, which enters pentose phosphate pathway. The chain is Probable D-xylulose reductase A (xdhA) from Aspergillus clavatus (strain ATCC 1007 / CBS 513.65 / DSM 816 / NCTC 3887 / NRRL 1 / QM 1276 / 107).